Reading from the N-terminus, the 529-residue chain is Heat shock protein 60 (529 aa).

A disordered region spans residues 460–484 (YQATVQHPPPQSSYEEDGRRPPTQP).

The polypeptide is Heat shock protein 60 (Giardia intestinalis (Giardia lamblia)).